Consider the following 317-residue polypeptide: tRNA dimethylallyltransferase (317 aa).

19–26 (GPTASGKS) is a binding site for ATP. 21–26 (TASGKS) serves as a coordination point for substrate. The interval 44 to 47 (DSMQ) is interaction with substrate tRNA.

The protein belongs to the IPP transferase family. In terms of assembly, monomer. Mg(2+) is required as a cofactor.

The enzyme catalyses adenosine(37) in tRNA + dimethylallyl diphosphate = N(6)-dimethylallyladenosine(37) in tRNA + diphosphate. Its function is as follows. Catalyzes the transfer of a dimethylallyl group onto the adenine at position 37 in tRNAs that read codons beginning with uridine, leading to the formation of N6-(dimethylallyl)adenosine (i(6)A). This Methylorubrum extorquens (strain CM4 / NCIMB 13688) (Methylobacterium extorquens) protein is tRNA dimethylallyltransferase.